The chain runs to 725 residues: Threonine--tRNA ligase, cytoplasmic (725 aa).

One can recognise a TGS domain in the interval 80-142; it reads EPIQITLPDG…EGNAKLELLK (63 aa).

The protein belongs to the class-II aminoacyl-tRNA synthetase family.

The protein resides in the cytoplasm. The enzyme catalyses tRNA(Thr) + L-threonine + ATP = L-threonyl-tRNA(Thr) + AMP + diphosphate + H(+). The sequence is that of Threonine--tRNA ligase, cytoplasmic from Caenorhabditis elegans.